Here is a 421-residue protein sequence, read N- to C-terminus: Subtilisin-like protease 2 (421 aa).

Residues 1–16 (MQLLNFGLLLLPFVAG) form the signal peptide. The propeptide occupies 17–122 (DLAPQPEPLL…VHPDQHVYLA (106 aa)). Residues 36–122 (QYIVTLKEGL…VHPDQHVYLA (87 aa)) enclose the Inhibitor I9 domain. Residues 131-421 (RWGLGYMSSK…ERKFTLPKYY (291 aa)) enclose the Peptidase S8 domain. Residues aspartate 169 and histidine 201 each act as charge relay system in the active site. N-linked (GlcNAc...) asparagine glycans are attached at residues asparagine 248, asparagine 261, and asparagine 348. Serine 357 serves as the catalytic Charge relay system. N-linked (GlcNAc...) asparagine glycosylation is present at asparagine 388.

The protein belongs to the peptidase S8 family.

Its subcellular location is the secreted. Secreted subtilisin-like serine protease with keratinolytic activity that contributes to pathogenicity. The polypeptide is Subtilisin-like protease 2 (SUB2) (Arthroderma benhamiae (strain ATCC MYA-4681 / CBS 112371) (Trichophyton mentagrophytes)).